The primary structure comprises 298 residues: Esterase Rv0045c (298 aa).

S122 (nucleophile) is an active-site residue. Catalysis depends on residues D146 and H277.

This sequence belongs to the AB hydrolase superfamily. Monomer.

The catalysed reaction is a carboxylic ester + H2O = an alcohol + a carboxylate + H(+). The enzyme catalyses a butanoate ester + H2O = an aliphatic alcohol + butanoate + H(+). It carries out the reaction an acetyl ester + H2O = an aliphatic alcohol + acetate + H(+). It catalyses the reaction a hexanoate ester + H2O = an aliphatic alcohol + hexanoate + H(+). The catalysed reaction is a tetradecanoate ester + H2O = an aliphatic alcohol + tetradecanoate + H(+). Its activity is regulated as follows. Hydrolysis of a fluorogenic ester substrate (MOAME) is allosterically inhibited by divalent transition metal cations (Cu(2+), Zn(2+), Ni(2+) and Co(2+)). Inhibition is largely due to a two order of magnitude drop in kcat, with relatively little change in KM. The thermal stability decreases with increasing concentrations of Ni(2+). Esterase likely involved in ester/lipid metabolism. Shows strong substrate selectivity toward short, straight chain alkyl esters with the highest activity toward four atom chains. The physiological substrate is unknown. Is able to hydrolyze ester bonds within a wide range of p-nitrophenyl derivatives (C2-C14) in vitro. The sequence is that of Esterase Rv0045c from Mycobacterium tuberculosis (strain ATCC 25618 / H37Rv).